Consider the following 20-residue polypeptide: Equinatoxin-1 (20 aa).

The tract at residues 3-12 (AVAGAVIEGA) is plays an important role in the hemolytic activity. Positions 11–20 (GASLTFNVLQ) are N-terminal region.

The protein belongs to the actinoporin family. Sea anemone subfamily. In terms of assembly, octamer or nonamer in membranes. Monomer in the soluble state.

The protein localises to the secreted. It is found in the nematocyst. Its subcellular location is the target cell membrane. Its function is as follows. Pore-forming protein that forms cations-selective hydrophilic pores of around 1 nm and causes cardiac stimulation and cytolysis. Pore formation is a multi-step process that involves specific recognition of membrane sphingomyelin (but neither cholesterol nor phosphatidylcholine) using aromatic rich region and adjacent phosphocholine (POC) binding site, firm binding to the membrane (mainly driven by hydrophobic interactions) accompanied by the transfer of the N-terminal region to the lipid-water interface and finally pore formation after oligomerization of monomers. Cytolytic effects include red blood cells hemolysis, platelet aggregation and lysis, cytotoxic and cytostatic effects on fibroblasts. Lethality in mammals has been ascribed to severe vasospasm of coronary vessels, cardiac arrhythmia, and inotropic effects. This is Equinatoxin-1 from Actinia equina (Beadlet anemone).